The sequence spans 689 residues: Transcription factor MYC2 (689 aa).

Residues 94 to 172 (LQQRLQALID…VLRELNSLIS (79 aa)) form a JAZ-interaction domain region. The segment covering 316–349 (NTVQTNSVPSSNSNKQIAYGNENNHPSGNGQSCY) has biased composition (polar residues). Disordered stretches follow at residues 316 to 361 (NTVQ…PQQQ) and 420 to 519 (QSQF…EAER). Positions 350 to 361 (NQQQQKNPPQQQ) are enriched in low complexity. A compositionally biased stretch (basic and acidic residues) spans 471-495 (DSEHSDLEASVVKEADSSRVVEPEK). The segment covering 496–505 (RPRKRGRKPA) has biased composition (basic residues). Basic and acidic residues predominate over residues 506–519 (NGREEPLNHVEAER). The basic motif; degenerate stretch occupies residues 509 to 522 (EEPLNHVEAERQRR). Positions 509-558 (EEPLNHVEAERQRREKLNQRFYALRAVVPNVSKMDKASLLGDAISYINEL) constitute a bHLH domain. Positions 523–558 (EKLNQRFYALRAVVPNVSKMDKASLLGDAISYINEL) are helix-loop-helix motif. The segment at 563–602 (QNTESDKEDLKSQIEDLKKESRRPGPPPPPNQDLKMSSHT) is disordered. Basic and acidic residues predominate over residues 566–585 (ESDKEDLKSQIEDLKKESRR).

Interacts (via N-terminus) with MED25. Interacts (via N-terminus) with JAZ7. MED25 and JAZ7 compete with each other to bind to MYC2. Interacts (via N-terminus) with MTB1. MTB1 and MED25 compete with each other to bind to MYC2. In terms of tissue distribution, expressed at low levels in roots, stems, leaves, flowers and fruits.

It localises to the nucleus. Its function is as follows. Transcriptional activator that binds to the G-box motif (5'-AACGTG-3') found in the promoter of the jasmonate-induced gene LAPA1. Acts as a negative regulator of blue light-mediated photomorphogenesis and positively regulates root growth. Promotes growth in response to the phytohormones abscisic acid (ABA) and jasmonate (JA). Binds to the G-box motif (5'-CACGTG-3') of the RBCS-3A gene promoter. Acts downstream of the jasmonate (JA) receptor to orchestrate JA-mediated activation of plant responses. Positively regulates both wound-responsive and pathogen-responsive genes through MYC2-targeted transcription factors (MTFs) involved in early response to JA. With JA2L forms a transcription module that regulates wounding-responsive genes. With ERF.C3 forms a transcription module that regulates pathogen-responsive genes. Plays a critical role in orchestrating JA-mediated defense gene expression during Botrytis cinerea infection. Negatively regulates defense responses to root-knot nematodes, potentially by mediating crosstalk among the hormones strigolactones, abscisic acid (ABA) and jasmonate (JA). Regulates the termination of JA-mediated defense responses by specifically binding the G-box (5'-CACATG-3') motifs in the promoters of MTB1, MTB2 and MTB3, which are transcription factors that negatively regulates JA signaling. May be involved in JA-induced chilling tolerance, possibly by ameliorating the antioxidant enzyme system of fruit and increasing proline and lycopene levels. The chain is Transcription factor MYC2 from Solanum lycopersicum (Tomato).